A 427-amino-acid chain; its full sequence is Peptidase B (427 aa).

The Mn(2+) site is built by Lys195 and Asp200. The active site involves Lys207. Residues Asp218, Asp277, and Glu279 each coordinate Mn(2+). Residue Arg281 is part of the active site.

It belongs to the peptidase M17 family. As to quaternary structure, homohexamer. Requires Mn(2+) as cofactor.

The protein localises to the cytoplasm. The catalysed reaction is Release of an N-terminal amino acid, Xaa, from a peptide or arylamide. Xaa is preferably Glu or Asp but may be other amino acids, including Leu, Met, His, Cys and Gln.. Functionally, probably plays an important role in intracellular peptide degradation. The polypeptide is Peptidase B (Citrobacter koseri (strain ATCC BAA-895 / CDC 4225-83 / SGSC4696)).